We begin with the raw amino-acid sequence, 89 residues long: Small ribosomal subunit protein uS15 (89 aa).

The protein belongs to the universal ribosomal protein uS15 family. Part of the 30S ribosomal subunit. Forms a bridge to the 50S subunit in the 70S ribosome, contacting the 23S rRNA.

Functionally, one of the primary rRNA binding proteins, it binds directly to 16S rRNA where it helps nucleate assembly of the platform of the 30S subunit by binding and bridging several RNA helices of the 16S rRNA. Its function is as follows. Forms an intersubunit bridge (bridge B4) with the 23S rRNA of the 50S subunit in the ribosome. The chain is Small ribosomal subunit protein uS15 from Neisseria gonorrhoeae (strain ATCC 700825 / FA 1090).